Reading from the N-terminus, the 508-residue chain is MGLPWYRVHTVVLNDPGRLLSVHIMHTALVAGWAGSMALYELAVFDPSDPVLDPMWRQGMFVIPFMTRLGITNSWGGWSITGGTITNPGIWSYEGVAGAHIVFSGLCFLAAIWHWVYWDLEIFCDERTGKPSLDLPKIFGIHLFLSGVACFGFGAFHVTGLYGPGIWVSDPYGLTGKVQPVSPAWGVEGFDPFVPGGIASHHIAAGTLGILAGLFHLSVRPPQRLYKGLRMGNIETVLSSSIAAVFFAAFVVAGTMWYGSATTPIELFGPTRYQWDQGYFQQEIYRRVSAGLAENQSLSEAWSKIPEKLAFYDYIGNNPAKGGLFRAGSMDNGDGIAVGWLGHPIFRDKEGRELFVRRMPTFFETFPVVLVDGDGIVRADVPFRRAESKYSVEQVGVTVEFYGGELNGVSYSDPVTVKKYARRAQLGEIFELDRATLKSDGVFRSSPRGWFTFGHASFALLFFFGHIWHGARTLFRDVFAGIDPDLDAQVEFGAFQKLGDPTTRRQVV.

6 helical membrane-spanning segments follow: residues 21–36, 101–115, 140–156, 203–218, 237–252, and 457–472; these read SVHI…WAGS, IVFS…IWHW, GIHL…FGAF, IAAG…FHLS, VLSS…AFVV, and SFAL…HGAR.

It belongs to the PsbB/PsbC family. PsbB subfamily. As to quaternary structure, PSII is composed of 1 copy each of membrane proteins PsbA, PsbB, PsbC, PsbD, PsbE, PsbF, PsbH, PsbI, PsbJ, PsbK, PsbL, PsbM, PsbT, PsbX, PsbY, PsbZ, Psb30/Ycf12, at least 3 peripheral proteins of the oxygen-evolving complex and a large number of cofactors. It forms dimeric complexes. The cofactor is Binds multiple chlorophylls. PSII binds additional chlorophylls, carotenoids and specific lipids..

It is found in the plastid. Its subcellular location is the chloroplast thylakoid membrane. In terms of biological role, one of the components of the core complex of photosystem II (PSII). It binds chlorophyll and helps catalyze the primary light-induced photochemical processes of PSII. PSII is a light-driven water:plastoquinone oxidoreductase, using light energy to abstract electrons from H(2)O, generating O(2) and a proton gradient subsequently used for ATP formation. This Manihot esculenta (Cassava) protein is Photosystem II CP47 reaction center protein.